Reading from the N-terminus, the 361-residue chain is 3-dehydroquinate synthase (361 aa).

NAD(+) contacts are provided by residues 105 to 109 (GVIGD), 129 to 130 (TT), lysine 142, lysine 151, and 169 to 172 (FLST). Zn(2+) contacts are provided by glutamate 184, histidine 247, and histidine 264.

It belongs to the sugar phosphate cyclases superfamily. Dehydroquinate synthase family. Co(2+) serves as cofactor. Zn(2+) is required as a cofactor. The cofactor is NAD(+).

It is found in the cytoplasm. The catalysed reaction is 7-phospho-2-dehydro-3-deoxy-D-arabino-heptonate = 3-dehydroquinate + phosphate. The protein operates within metabolic intermediate biosynthesis; chorismate biosynthesis; chorismate from D-erythrose 4-phosphate and phosphoenolpyruvate: step 2/7. In terms of biological role, catalyzes the conversion of 3-deoxy-D-arabino-heptulosonate 7-phosphate (DAHP) to dehydroquinate (DHQ). This Endomicrobium trichonymphae protein is 3-dehydroquinate synthase.